The chain runs to 551 residues: MTLRAMTDVGAELGLSPEDVLPWGTHRAKVSLDALGKRGGRQGRLVLVSAINPTPPGEGKTTMSVALAMGLRKRGRRAVAALREPSLGPVFGVKGGGTGGGQASLEPAADINLHFTGDLHAITSANNLLSALVDNAVFYGQPVALDATRVRWRRALDMNDRFLRNVIVGLGGKAQGVPREDHFDITAASEVMAILALAEGLKDLEARLGRVIIGHTRDGQPVRARDVDAAASMVALLKDALMPNLAQTREGGPALVHAGPFANIAHGCSSVMGTRMGLAYADEVITEAGFGFDLGAEKFLDIKCRGSGLWPRGVVLVVTLRALKHHGGASPARVAEPDREALVRGFAHLEKHLESVAAFGLPAVLCVNRFPQDTESELEELRAFGKARGVETAVCDGFSRGGDGSLELADCVLEMLDGTDAAPPQPRFLYDVAQTPEEKVAAIARTVYGADDVAFTASAKKDLDAIRELGGAGLPVCMAKTHLSLSDDPTKLGRPRGFTLTVREVRLSAGAGFMVALTGEILTMPGLPREPAARRVTVHDDGRVTGLMQGE.

Position 54 to 61 (54 to 61 (TPPGEGKT)) interacts with ATP.

Belongs to the formate--tetrahydrofolate ligase family.

The enzyme catalyses (6S)-5,6,7,8-tetrahydrofolate + formate + ATP = (6R)-10-formyltetrahydrofolate + ADP + phosphate. Its pathway is one-carbon metabolism; tetrahydrofolate interconversion. This chain is Formate--tetrahydrofolate ligase, found in Myxococcus xanthus (strain DK1622).